The primary structure comprises 264 residues: Small ribosomal subunit protein eS1 (264 aa).

Residues 233-264 (GEGGGAGKPSGDEAGAKVERADGYEPPVQESV) are disordered. Basic and acidic residues predominate over residues 242-255 (SGDEAGAKVERADG).

The protein belongs to the eukaryotic ribosomal protein eS1 family. Component of the small ribosomal subunit. Mature ribosomes consist of a small (40S) and a large (60S) subunit. The 40S subunit contains about 33 different proteins and 1 molecule of RNA (18S). The 60S subunit contains about 49 different proteins and 3 molecules of RNA (25S, 5.8S and 5S).

The protein resides in the cytoplasm. This Eimeria tenella (Coccidian parasite) protein is Small ribosomal subunit protein eS1.